The sequence spans 390 residues: MNLHEYQSKHLLKKYNIPVPASEVVFNPDAAVDAAAKIGGDRWVVKAQVHAGGRGKAGGVRLVKNKEELKSAVKALLGMRLVTYQTDERGQPVNQILVEQTSDIARELYLGAVIDRASQRIVFMASTEGGVEIEKVAEKSPEKILKVTVDPAIGLQPFQCRQLFFGLGLQDLKQMRSFTDIVMGLYRLFTERDLSLLEINPLVITGSGELICLDAKINIDDSALYRQSELREMRDTTQEDEHETMAQQWELNYIKLDGNIGCMVNGAGLAMATMDLIKLSGGDPANFLDVGGSATKERVTEAFKIIVSDKNVKGILVNIFGGIVRCDLIADGIISAVKEVGIDVPVVVRLEGNNAQLGAKKLADSGMNIIAAKGFADAAEQIVKQVGVIA.

In terms of domain architecture, ATP-grasp spans 9-245; that stretch reads KHLLKKYNIP…TTQEDEHETM (237 aa). ATP-binding positions include Lys46, 53-55, Glu99, Ser102, and Glu107; that span reads GRG. Positions 200 and 214 each coordinate Mg(2+). Substrate-binding positions include Asn265 and 322 to 324; that span reads GIV.

Belongs to the succinate/malate CoA ligase beta subunit family. Heterotetramer of two alpha and two beta subunits. It depends on Mg(2+) as a cofactor.

It catalyses the reaction succinate + ATP + CoA = succinyl-CoA + ADP + phosphate. The catalysed reaction is GTP + succinate + CoA = succinyl-CoA + GDP + phosphate. Its pathway is carbohydrate metabolism; tricarboxylic acid cycle; succinate from succinyl-CoA (ligase route): step 1/1. Its function is as follows. Succinyl-CoA synthetase functions in the citric acid cycle (TCA), coupling the hydrolysis of succinyl-CoA to the synthesis of either ATP or GTP and thus represents the only step of substrate-level phosphorylation in the TCA. The beta subunit provides nucleotide specificity of the enzyme and binds the substrate succinate, while the binding sites for coenzyme A and phosphate are found in the alpha subunit. In Coxiella burnetii (strain CbuG_Q212) (Coxiella burnetii (strain Q212)), this protein is Succinate--CoA ligase [ADP-forming] subunit beta.